The chain runs to 109 residues: Large ribosomal subunit protein uL22 (109 aa).

Belongs to the universal ribosomal protein uL22 family. In terms of assembly, part of the 50S ribosomal subunit.

This protein binds specifically to 23S rRNA; its binding is stimulated by other ribosomal proteins, e.g. L4, L17, and L20. It is important during the early stages of 50S assembly. It makes multiple contacts with different domains of the 23S rRNA in the assembled 50S subunit and ribosome. In terms of biological role, the globular domain of the protein is located near the polypeptide exit tunnel on the outside of the subunit, while an extended beta-hairpin is found that lines the wall of the exit tunnel in the center of the 70S ribosome. The sequence is that of Large ribosomal subunit protein uL22 from Cupriavidus taiwanensis (strain DSM 17343 / BCRC 17206 / CCUG 44338 / CIP 107171 / LMG 19424 / R1) (Ralstonia taiwanensis (strain LMG 19424)).